The chain runs to 538 residues: Syncytin-2 (538 aa).

Positions 1 to 15 (MGLLLLVLILTPSLA) are cleaved as a signal peptide. Residues 16–478 (AYRHPDFPLL…GWLNWEGTWK (463 aa)) lie on the Extracellular side of the membrane. The short motif at 43–46 (CWLC) is the CXXC element. 3 cysteine pairs are disulfide-bonded: cysteine 43–cysteine 46, cysteine 43–cysteine 439, and cysteine 431–cysteine 438. N-linked (GlcNAc...) asparagine glycans are attached at residues asparagine 133, asparagine 146, asparagine 177, asparagine 220, asparagine 241, asparagine 247, asparagine 312, and asparagine 332. The interval 354–374 (FIPLLAGLGILAGTGTGIAGI) is fusion peptide. Positions 414–430 (LQNRRGLDMLTAAQGGI) match the CKS-17 motif. The CX6CC signature appears at 431 to 439 (CLALDEKCC). Asparagine 443 is a glycosylation site (N-linked (GlcNAc...) asparagine). Residues 479–499 (WFSWVLPLTGPLVSLLLLLLF) traverse the membrane as a helical segment. Residues 500-538 (GPCLLNLITQFVSSRLQAIKLQTNLSAGRHPRNIQESPF) lie on the Cytoplasmic side of the membrane.

This sequence belongs to the gamma type-C retroviral envelope protein family. HERV class-I FRD env subfamily. As to quaternary structure, the surface and transmembrane proteins form a heterodimer. They are attached by non-covalent interactions or by a labile interchain disulfide bond. Specific enzymatic cleavages in vivo yield the mature SU and TM proteins. In terms of processing, the CXXC motif is highly conserved across a broad range of retroviral envelope proteins. It is thought to participate in the formation of a labile disulfide bond possibly with the CX6CC motif present in the transmembrane protein.

The protein localises to the virion. It localises to the cell membrane. Its function is as follows. This endogenous retroviral envelope protein has retained its original fusogenic properties and participates in trophoblast fusion and the formation of a syncytium during placenta morphogenesis. The interaction with MFSD2A is apparently important for this process. In terms of biological role, endogenous envelope proteins may have kept, lost or modified their original function during evolution but this one can still make pseudotypes with MLV, HIV-1 or SIV-1 virions and confer infectivity. Retroviral envelope proteins mediate receptor recognition and membrane fusion during early infection. The surface protein mediates receptor recognition, while the transmembrane protein anchors the envelope heterodimer to the viral membrane through one transmembrane domain. The other hydrophobic domain, called fusion peptide, mediates fusion of the viral membrane with the target cell membrane. The sequence is that of Syncytin-2 (ERVFRD-1) from Pan troglodytes (Chimpanzee).